A 332-amino-acid chain; its full sequence is Small ribosomal subunit biogenesis GTPase RsgA (332 aa).

A CP-type G domain is found at 103–259 (RQQLIAANLD…LIDTPGMREL (157 aa)). Residues 148-151 (TKVD) and 201-209 (GSSGAGKST) contribute to the GTP site. The Zn(2+) site is built by Cys-281, Cys-286, His-288, and Cys-294.

Belongs to the TRAFAC class YlqF/YawG GTPase family. RsgA subfamily. As to quaternary structure, monomer. Associates with 30S ribosomal subunit, binds 16S rRNA. Zn(2+) is required as a cofactor.

The protein localises to the cytoplasm. Functionally, one of several proteins that assist in the late maturation steps of the functional core of the 30S ribosomal subunit. Helps release RbfA from mature subunits. May play a role in the assembly of ribosomal proteins into the subunit. Circularly permuted GTPase that catalyzes slow GTP hydrolysis, GTPase activity is stimulated by the 30S ribosomal subunit. The sequence is that of Small ribosomal subunit biogenesis GTPase RsgA from Xylella fastidiosa (strain M23).